A 344-amino-acid polypeptide reads, in one-letter code: Holliday junction branch migration complex subunit RuvB (344 aa).

The interval 1–181 is large ATPase domain (RuvB-L); it reads MERIVTPAEM…FGVLCAMEYY (181 aa). ATP is bound by residues Leu-20, Arg-21, Gly-62, Lys-65, Thr-66, Thr-67, 128 to 130, Arg-171, Tyr-181, and Arg-218; that span reads EDY. Thr-66 contributes to the Mg(2+) binding site. The segment at 182–252 is small ATPAse domain (RuvB-S); that stretch reads DENQLKEIVI…EAREALELLE (71 aa). The interval 255-344 is head domain (RuvB-H); that stretch reads NQGFDKVDNK…SNKGQTSFFK (90 aa). Residues Arg-310 and Arg-315 each coordinate DNA.

It belongs to the RuvB family. In terms of assembly, homohexamer. Forms an RuvA(8)-RuvB(12)-Holliday junction (HJ) complex. HJ DNA is sandwiched between 2 RuvA tetramers; dsDNA enters through RuvA and exits via RuvB. An RuvB hexamer assembles on each DNA strand where it exits the tetramer. Each RuvB hexamer is contacted by two RuvA subunits (via domain III) on 2 adjacent RuvB subunits; this complex drives branch migration. In the full resolvosome a probable DNA-RuvA(4)-RuvB(12)-RuvC(2) complex forms which resolves the HJ.

Its subcellular location is the cytoplasm. The catalysed reaction is ATP + H2O = ADP + phosphate + H(+). Functionally, the RuvA-RuvB-RuvC complex processes Holliday junction (HJ) DNA during genetic recombination and DNA repair, while the RuvA-RuvB complex plays an important role in the rescue of blocked DNA replication forks via replication fork reversal (RFR). RuvA specifically binds to HJ cruciform DNA, conferring on it an open structure. The RuvB hexamer acts as an ATP-dependent pump, pulling dsDNA into and through the RuvAB complex. RuvB forms 2 homohexamers on either side of HJ DNA bound by 1 or 2 RuvA tetramers; 4 subunits per hexamer contact DNA at a time. Coordinated motions by a converter formed by DNA-disengaged RuvB subunits stimulates ATP hydrolysis and nucleotide exchange. Immobilization of the converter enables RuvB to convert the ATP-contained energy into a lever motion, pulling 2 nucleotides of DNA out of the RuvA tetramer per ATP hydrolyzed, thus driving DNA branch migration. The RuvB motors rotate together with the DNA substrate, which together with the progressing nucleotide cycle form the mechanistic basis for DNA recombination by continuous HJ branch migration. Branch migration allows RuvC to scan DNA until it finds its consensus sequence, where it cleaves and resolves cruciform DNA. The sequence is that of Holliday junction branch migration complex subunit RuvB from Clostridium botulinum (strain Alaska E43 / Type E3).